The primary structure comprises 156 residues: Persephin (156 aa).

An N-terminal signal peptide occupies residues 1 to 21 (MAAGRLRILCLLLLSLHPSLG). 3 disulfide bridges follow: Cys66-Cys124, Cys93-Cys152, and Cys97-Cys154.

This sequence belongs to the TGF-beta family. GDNF subfamily. In terms of assembly, homodimer; disulfide-linked. Interacts with GFRA4 coreceptor and RET: forms a 2:2:2 ternary complex composed of PSPN ligand, GFRA4 and RET receptor.

The protein localises to the secreted. Growth factor that exhibits neurotrophic activity on mesencephalic dopaminergic and motor neurons. Acts by binding to its coreceptor, GFRA4, leading to autophosphorylation and activation of the RET receptor. The polypeptide is Persephin (Mus musculus (Mouse)).